A 720-amino-acid chain; its full sequence is F-box/LRR-repeat MAX2 homolog (720 aa).

The 47-residue stretch at 14-60 folds into the F-box domain; sequence SSAILDLPEPLLLHILSFLTDVRSRHRAALACGRMRAAERATRSELS. LRR repeat units lie at residues 71–134, 135–158, 159–189, 190–218, 219–247, 248–279, 280–316, 317–344, 345–372, 373–398, 399–435, 436–452, 453–510, 511–537, 538–571, 572–606, 607–644, and 645–720; these read LFLS…QNAF, IAAR…DPTT, LANL…PDGA, DLEP…DVVR, ALTT…FKSS, ELGP…VGDD, ALLS…ITVA, GLVA…EAAP, AMEA…KASW, LHLD…LTDA, SLAA…TLRP, TLKE…HTAE, CLTA…KCRY, MEFD…LLSP, LISA…PRTI, FGLS…GQMD, LSLW…SLTL, and PAVG…QIDD.

In terms of assembly, associates to a SCF (SKP1-CUL1-F-box protein) E3 ubiquitin-protein ligase complex. Interacts with D14 in a strigolactone-dependent manner. Interacts with SKP1, SKP5 and SKP20. In terms of tissue distribution, expressed in leaves. Expressed in roots, culms, leaf blades, leaf sheaths, shoot bases and panicles.

It localises to the nucleus. Functionally, involved in strigolactone (SL) signaling. Required for responses to SLs and the establishment of arbuscular mycorrhiza symbiosis in rice. Strigolactone-dependent association of D3 with D14 and D53 (a repressor of SL signaling) triggers D53 ubiquitination and degradation. Controls tillering by suppressing axillary bud activity. Tiller is a specialized grain-bearing branch that is formed on the unelongated basal internode and grows independently of the mother stem (culm) by means of its own adventitious roots. The protein is F-box/LRR-repeat MAX2 homolog of Oryza sativa subsp. japonica (Rice).